A 338-amino-acid chain; its full sequence is Nicotinate-nucleotide--dimethylbenzimidazole phosphoribosyltransferase (338 aa).

Glu306 serves as the catalytic Proton acceptor.

It belongs to the CobT family.

The catalysed reaction is 5,6-dimethylbenzimidazole + nicotinate beta-D-ribonucleotide = alpha-ribazole 5'-phosphate + nicotinate + H(+). Its pathway is nucleoside biosynthesis; alpha-ribazole biosynthesis; alpha-ribazole from 5,6-dimethylbenzimidazole: step 1/2. Catalyzes the synthesis of alpha-ribazole-5'-phosphate from nicotinate mononucleotide (NAMN) and 5,6-dimethylbenzimidazole (DMB). This is Nicotinate-nucleotide--dimethylbenzimidazole phosphoribosyltransferase from Cereibacter sphaeroides (strain ATCC 17025 / ATH 2.4.3) (Rhodobacter sphaeroides).